The following is a 301-amino-acid chain: Ethylmalonyl-CoA decarboxylase (301 aa).

N6-acetyllysine; alternate is present on K211. The residue at position 211 (K211) is an N6-succinyllysine; alternate. K295 carries the post-translational modification N6-succinyllysine.

It belongs to the enoyl-CoA hydratase/isomerase family.

It is found in the cytoplasm. The protein resides in the cytosol. The enzyme catalyses (2S)-ethylmalonyl-CoA + H(+) = butanoyl-CoA + CO2. It catalyses the reaction (S)-methylmalonyl-CoA + H(+) = propanoyl-CoA + CO2. The catalysed reaction is (2R)-ethylmalonyl-CoA + H(+) = butanoyl-CoA + CO2. Functionally, decarboxylates ethylmalonyl-CoA, a potentially toxic metabolite, to form butyryl-CoA, suggesting it might be involved in metabolite proofreading. Acts preferentially on (S)-ethylmalonyl-CoA but also has some activity on the (R)-isomer. Also has methylmalonyl-CoA decarboxylase activity at lower level. The protein is Ethylmalonyl-CoA decarboxylase (ECHDC1) of Pongo abelii (Sumatran orangutan).